The sequence spans 488 residues: E3 ubiquitin-protein ligase TRIM39 (488 aa).

An RING-type zinc finger spans residues Cys29–Arg70. The B box-type zinc-finger motif lies at Arg102 to Met143. Residues Cys107, His110, Cys129, and His135 each coordinate Zn(2+). Positions Glu181 to Lys250 form a coiled coil. Interaction with CDKN1A stretches follow at residues Lys268–Ala307 and Thr359–Glu488. In terms of domain architecture, B30.2/SPRY spans Ser289–Pro484.

This sequence belongs to the TRIM/RBCC family. Interacts with MOAP1. Interacts with CDKN1A. Autoubiquitinated.

It is found in the cytoplasm. It localises to the cytosol. The protein resides in the mitochondrion. The protein localises to the nucleus. It catalyses the reaction S-ubiquitinyl-[E2 ubiquitin-conjugating enzyme]-L-cysteine + [acceptor protein]-L-lysine = [E2 ubiquitin-conjugating enzyme]-L-cysteine + N(6)-ubiquitinyl-[acceptor protein]-L-lysine.. It participates in protein modification; protein ubiquitination. E3 ubiquitin-protein ligase. May facilitate apoptosis by inhibiting APC/C-Cdh1-mediated poly-ubiquitination and subsequent proteasome-mediated degradation of the pro-apoptotic protein MOAP1. Regulates the G1/S transition of the cell cycle and DNA damage-induced G2 arrest by stabilizing CDKN1A/p21. Positively regulates CDKN1A/p21 stability by competing with DTL for CDKN1A/p21 binding, therefore disrupting DCX(DTL) E3 ubiquitin ligase complex-mediated CDKN1A/p21 ubiquitination and degradation. This is E3 ubiquitin-protein ligase TRIM39 (Trim39) from Mus musculus (Mouse).